The sequence spans 212 residues: ATP phosphoribosyltransferase (212 aa).

This sequence belongs to the ATP phosphoribosyltransferase family. Short subfamily. In terms of assembly, heteromultimer composed of HisG and HisZ subunits.

It localises to the cytoplasm. It catalyses the reaction 1-(5-phospho-beta-D-ribosyl)-ATP + diphosphate = 5-phospho-alpha-D-ribose 1-diphosphate + ATP. It functions in the pathway amino-acid biosynthesis; L-histidine biosynthesis; L-histidine from 5-phospho-alpha-D-ribose 1-diphosphate: step 1/9. In terms of biological role, catalyzes the condensation of ATP and 5-phosphoribose 1-diphosphate to form N'-(5'-phosphoribosyl)-ATP (PR-ATP). Has a crucial role in the pathway because the rate of histidine biosynthesis seems to be controlled primarily by regulation of HisG enzymatic activity. The chain is ATP phosphoribosyltransferase from Prochlorococcus marinus (strain AS9601).